A 282-amino-acid chain; its full sequence is Large ribosomal subunit protein uL2 (282 aa).

Disordered regions lie at residues 31–54 and 223–282; these read KRLTKPVRKSGGRNAHGKVTTRHI and LAMN…NTQR. 2 stretches are compositionally biased toward basic residues: residues 34 to 54 and 270 to 282; these read TKPVRKSGGRNAHGKVTTRHI and VTRRRPGVRNTQR.

The protein belongs to the universal ribosomal protein uL2 family. Part of the 50S ribosomal subunit. Forms a bridge to the 30S subunit in the 70S ribosome.

In terms of biological role, one of the primary rRNA binding proteins. Required for association of the 30S and 50S subunits to form the 70S ribosome, for tRNA binding and peptide bond formation. It has been suggested to have peptidyltransferase activity; this is somewhat controversial. Makes several contacts with the 16S rRNA in the 70S ribosome. This is Large ribosomal subunit protein uL2 from Anaeromyxobacter dehalogenans (strain 2CP-1 / ATCC BAA-258).